The primary structure comprises 178 residues: Outer envelope pore protein 16-2, chloroplastic (178 aa).

Positions 1-102 (MEKSGGRIVM…DALVKNTGKE (102 aa)) are contains beta strands. Residues 103–119 (SLQWGLAAGLYSGITYG) form a helical membrane-spanning segment.

This sequence belongs to the Tim17/Tim22/Tim23 family. Plastid outer envelope porin OEP16 (TC 1.B.30) subfamily. In terms of assembly, homodimer and oligomers in membrane. In terms of tissue distribution, detected in pollen and seeds. Present in leaves and cotyledons.

It is found in the plastid. Its subcellular location is the chloroplast outer membrane. Its function is as follows. Voltage-dependent high-conductance channel with a slight cation-selectivity; selective for amino acids but excludes triosephosphates or uncharged sugars. Non-essential amino acid-selective channel protein and translocation pore for NADPH:protochlorophyllide oxidoreductase A (PORA) and possibly PORB. This Arabidopsis thaliana (Mouse-ear cress) protein is Outer envelope pore protein 16-2, chloroplastic (OEP162).